Here is a 471-residue protein sequence, read N- to C-terminus: Metal tolerance protein C1 (471 aa).

Over 1 to 78 the chain is Cytoplasmic; it reads MGIIRFQILN…PGEEGEKIFR (78 aa). The helical transmembrane segment at 79–99 threads the bilayer; sequence LGLTADIGLSVAKALTGYLCG. Over 100-101 the chain is Vacuolar; it reads ST. The chain crosses the membrane as a helical span at residues 102–122; sequence AIIADAAHSVSDVVLSGVALV. The Cytoplasmic portion of the chain corresponds to 123 to 144; the sequence is SYRAANVPKDKEHPYGHGKFET. Residues 145–165 form a helical membrane-spanning segment; the sequence is LGALGISAMLLATGSGIAWHA. Residues 166 to 192 are Vacuolar-facing; sequence LDLLSIALSAAPEVIHSGHHHGIDMNH. The helical transmembrane segment at 193–213 threads the bilayer; the sequence is PILALTVTIASISIKEGLYWI. The Cytoplasmic segment spans residues 214-236; sequence TKRAGEKQGSGLMMANAWHHRSD. A helical membrane pass occupies residues 237 to 257; that stretch reads AISSLVALVGVGGSILGVNFL. Residues 258–423 are Vacuolar-facing; it reads DPLAGLVVST…RITPHLLHSK (166 aa). Residues 424–444 form a helical membrane-spanning segment; that stretch reads ILLQIVVAMPSTMSIQDVMIA. The Cytoplasmic portion of the chain corresponds to 445–471; sequence AEHAEKEILKAAPNVARVSIQLSLNSE.

This sequence belongs to the cation diffusion facilitator (CDF) transporter (TC 2.A.4) family.

It is found in the vacuole membrane. Involved in sequestration of excess metal in the cytoplasm into vacuoles to maintain metal homeostasis. This chain is Metal tolerance protein C1 (MTPC1), found in Arabidopsis thaliana (Mouse-ear cress).